The following is a 148-amino-acid chain: NPC intracellular cholesterol transporter 2 homolog a (148 aa).

An N-terminal signal peptide occupies residues 1–16 (MLRYAVIACAALVVFA). Disulfide bonds link cysteine 24-cysteine 140, cysteine 39-cysteine 46, and cysteine 92-cysteine 99. Residue asparagine 51 is glycosylated (N-linked (GlcNAc...) asparagine).

This sequence belongs to the NPC2 family. As to expression, broadly expressed with a higher level of expression in many tissues, including midgut, salivary gland and ventral nerve cord.

The protein localises to the secreted. In terms of biological role, functions redundantly with Npc2b in regulating sterol homeostasis and ecdysteroid biosynthesis, probably by controlling the availability of sterol substrate. The chain is NPC intracellular cholesterol transporter 2 homolog a from Drosophila melanogaster (Fruit fly).